We begin with the raw amino-acid sequence, 663 residues long: Methionine--tRNA ligase (663 aa).

The short motif at 10–20 (AYTNGPLHLGH) is the 'HIGH' region element. Positions 142, 145, 154, and 157 each coordinate Zn(2+). The 'KMSKS' region signature appears at 323-327 (KMSTS). Residue Thr326 participates in ATP binding. The 101-residue stretch at 563 to 663 (YFGNIDLRVG…RDLPVGSKIH (101 aa)) folds into the tRNA-binding domain.

Belongs to the class-I aminoacyl-tRNA synthetase family. MetG type 1 subfamily. In terms of assembly, homodimer. Zn(2+) is required as a cofactor.

The protein resides in the cytoplasm. The catalysed reaction is tRNA(Met) + L-methionine + ATP = L-methionyl-tRNA(Met) + AMP + diphosphate. Functionally, is required not only for elongation of protein synthesis but also for the initiation of all mRNA translation through initiator tRNA(fMet) aminoacylation. The chain is Methionine--tRNA ligase from Methanococcus maripaludis (strain C5 / ATCC BAA-1333).